The following is a 291-amino-acid chain: Arabinogalactan O-methyltransferase 2 (291 aa).

Residues 18–38 (WFLAVALAGLIGGAMLITSFI) form a helical membrane-spanning segment.

This sequence belongs to the methyltransferase superfamily.

The protein localises to the golgi apparatus membrane. Functionally, involved in the methylation of glucuronic acid of different plant cell wall component, but mainly on side chains of arabinogalactans. This chain is Arabinogalactan O-methyltransferase 2, found in Arabidopsis thaliana (Mouse-ear cress).